The following is a 481-amino-acid chain: Arylsulfatase (481 aa).

3 residues coordinate Ca(2+): Asp11, Gln12, and Cys51. Cys51 serves as the catalytic Nucleophile. Cys51 bears the 3-oxoalanine (Cys) mark. Residue His102 is part of the active site. Ca(2+)-binding residues include Asp302 and His303.

Belongs to the sulfatase family. Requires Ca(2+) as cofactor. Post-translationally, the conversion to 3-oxoalanine (also known as C-formylglycine, FGly), of a serine or cysteine residue in prokaryotes and of a cysteine residue in eukaryotes, is critical for catalytic activity.

It carries out the reaction an aryl sulfate + H2O = a phenol + sulfate + H(+). In terms of biological role, has sulfatase activity toward para-nitrophenyl sulfate, which is increased in presence of calcium ion. The chain is Arylsulfatase from Clostridium perfringens (strain 13 / Type A).